We begin with the raw amino-acid sequence, 293 residues long: NAD kinase (293 aa).

Asp-73 serves as the catalytic Proton acceptor. Residues 73-74, 147-148, Arg-175, Asp-177, and 188-193 each bind NAD(+); these read DG, NE, and TAYSMS.

The protein belongs to the NAD kinase family. A divalent metal cation is required as a cofactor.

The protein resides in the cytoplasm. It carries out the reaction NAD(+) + ATP = ADP + NADP(+) + H(+). Involved in the regulation of the intracellular balance of NAD and NADP, and is a key enzyme in the biosynthesis of NADP. Catalyzes specifically the phosphorylation on 2'-hydroxyl of the adenosine moiety of NAD to yield NADP. This is NAD kinase from Colwellia psychrerythraea (strain 34H / ATCC BAA-681) (Vibrio psychroerythus).